The sequence spans 158 residues: E3 ubiquitin ligase complex SCF subunit sconC (158 aa).

Positions 100–158 are interaction with the F-box domain of F-box proteins; it reads ILAANYLDIKALLDVGCKTVANMIKGKSPEEIRKTFNIQNDFTPEEEDQIRRENEWAEE.

The protein belongs to the SKP1 family. As to quaternary structure, component of the SCF (SKP1-CUL1-F-box protein) E3 ubiquitin ligase complexes.

The protein operates within protein modification; protein ubiquitination. Its function is as follows. Essential component of the SCF (SKP1-CUL1-F-box protein) E3 ubiquitin ligase complexes, which mediate the ubiquitination and subsequent proteasomal degradation of target proteins. Controls sulfur metabolite repression, probably by mediating the inactivation or degradation of the metR transcription factor. The polypeptide is E3 ubiquitin ligase complex SCF subunit sconC (sconC) (Aspergillus fumigatus (strain CBS 144.89 / FGSC A1163 / CEA10) (Neosartorya fumigata)).